The sequence spans 269 residues: Arginine and glutamate-rich protein 1-B (269 aa).

Residues 1–57 (MGRSRSRSSSRSKHSKTSKHSKKRSRSRSRSRDRERKRRSKSRESKRNRRRESRSRS) show a composition bias toward basic residues. The interval 1 to 70 (MGRSRSRSSS…TATSRRDRER (70 aa)) is necessary and sufficient for RNA binding. Disordered regions lie at residues 1-109 (MGRS…MERQ) and 233-269 (RMKLEQERQKQQKEEQKMILGKGKSRPKLSFSLKASE). 3 stretches are compositionally biased toward basic and acidic residues: residues 64–80 (SRRDRERAASPPERIDI), 89–109 (SAVDEKQKKEEEEKKVEMERQ), and 233–249 (RMKLEQERQKQQKEEQK). The tract at residues 71–269 (AASPPERIDI…KLSFSLKASE (199 aa)) is necessary and sufficient for transcriptional regulation.

It belongs to the ARGLU1 family.

It localises to the nucleus. It is found in the nucleus speckle. Its subcellular location is the chromosome. Its function is as follows. Dual function regulator of gene expression; regulator of transcription and modulator of alternative splicing. General coactivator of nuclear receptor-induced gene expression. The sequence is that of Arginine and glutamate-rich protein 1-B (arglu1b) from Danio rerio (Zebrafish).